The chain runs to 36 residues: Phosphoglycerate kinase, chloroplastic (36 aa).

Residues A22, D23, and N25 each coordinate (2R)-3-phosphoglycerate.

Belongs to the phosphoglycerate kinase family. In terms of assembly, monomer. Requires Mg(2+) as cofactor.

It localises to the plastid. The protein resides in the chloroplast. It carries out the reaction (2R)-3-phosphoglycerate + ATP = (2R)-3-phospho-glyceroyl phosphate + ADP. The protein operates within carbohydrate biosynthesis; Calvin cycle. The polypeptide is Phosphoglycerate kinase, chloroplastic (Scenedesmus fuscus (Green alga)).